Consider the following 424-residue polypeptide: MASEKPHMNLVIIGHVDHGKSTLVGRLLFEHGEIPQHIIDEYKKEAEEKGKATFEFAWVMDRFKEERERGVTIDLTHRKFETDKYYFTIIDAPGHRDFVKNMITGTSQADAAVLVVSAREGEGVMAQTKEHAFLARTLGVPQLIAVVNKMDATQPPYSEKRFNEVKDEITKLLTPIGFKNVPIIPLSGYKGDNIMKPSPNLSWWKGPTLMEALNALQVPAKPVDKPLRLPVEDVYSITGIGTVPVGRIETGVMKVGDKVIFMPANKAGDVKSIEMHHEPMQQAGPGDNIGFNVRGIAKNELKRGDVCGPANNPPTVVKGFTAQIVVLNHPSVIAAGYKPVFHVHTAQVACRIDEIVKTINPKDGTTLKEKPDFIKTGDIAIVKVVPDRALVIEKVSEFPQLGRFAIRDMGMTVAAGQCIDLEKA.

Residues 5 to 223 (KPHMNLVIIG…NALQVPAKPV (219 aa)) form the tr-type G domain. The segment at 14-21 (GHVDHGKS) is G1. 14 to 21 (GHVDHGKS) provides a ligand contact to GTP. Serine 21 is a Mg(2+) binding site. The tract at residues 70–74 (GVTID) is G2. The segment at 91–94 (DAPG) is G3. GTP contacts are provided by residues 91 to 95 (DAPGH) and 148 to 151 (NKMD). Residues 148–151 (NKMD) are G4. The tract at residues 187-189 (SGY) is G5.

The protein belongs to the TRAFAC class translation factor GTPase superfamily. Classic translation factor GTPase family. EF-Tu/EF-1A subfamily.

Its subcellular location is the cytoplasm. The enzyme catalyses GTP + H2O = GDP + phosphate + H(+). In terms of biological role, GTP hydrolase that promotes the GTP-dependent binding of aminoacyl-tRNA to the A-site of ribosomes during protein biosynthesis. This chain is Elongation factor 1-alpha, found in Picrophilus torridus (strain ATCC 700027 / DSM 9790 / JCM 10055 / NBRC 100828 / KAW 2/3).